A 373-amino-acid chain; its full sequence is tRNA-specific 2-thiouridylase MnmA (373 aa).

ATP is bound by residues 12–19 (GMSGGVDS) and Met-38. The interaction with target base in tRNA stretch occupies residues 98–100 (NPD). Cys-103 (nucleophile) is an active-site residue. Cysteines 103 and 200 form a disulfide. Gly-127 provides a ligand contact to ATP. Residues 150 to 152 (KDQ) are interaction with tRNA. The active-site Cysteine persulfide intermediate is Cys-200. Residues 312–313 (RY) are interaction with tRNA.

This sequence belongs to the MnmA/TRMU family.

It is found in the cytoplasm. It carries out the reaction S-sulfanyl-L-cysteinyl-[protein] + uridine(34) in tRNA + AH2 + ATP = 2-thiouridine(34) in tRNA + L-cysteinyl-[protein] + A + AMP + diphosphate + H(+). Functionally, catalyzes the 2-thiolation of uridine at the wobble position (U34) of tRNA, leading to the formation of s(2)U34. This is tRNA-specific 2-thiouridylase MnmA from Streptococcus agalactiae serotype III (strain NEM316).